Reading from the N-terminus, the 294-residue chain is Sarcotoxin II-2 (294 aa).

A signal peptide spans 1-22 (MKSFVFFAACFAIVALNSLAHA). A propeptide spans 23–24 (YP) (removed by a dipeptidylpeptidase). Pyrrolidone carboxylic acid is present on glutamine 25. Arginine 293 is modified (arginine amide).

It belongs to the attacin/sarcotoxin-2 family. Synthesized by the fat body and is eventually secreted into the hemolymph.

It is found in the secreted. Its function is as follows. Sarcotoxin II is an antibacterial protein which plays a role in the inflammatory response of this insect. The main effect of sarcotoxin II on E.coli may be the inhibition of cell wall synthesis, including septum formation. This chain is Sarcotoxin II-2, found in Sarcophaga peregrina (Flesh fly).